A 787-amino-acid chain; its full sequence is Protein translocase subunit SecA 2 (787 aa).

ATP contacts are provided by residues Q86, 104–108 (GEGKT), and D493.

This sequence belongs to the SecA family. As to quaternary structure, monomer and homodimer. Part of the essential Sec protein translocation apparatus which comprises SecA, SecYEG and auxiliary proteins SecDF. Other proteins may also be involved.

It is found in the cell membrane. It localises to the cytoplasm. The catalysed reaction is ATP + H2O + cellular proteinSide 1 = ADP + phosphate + cellular proteinSide 2.. In terms of biological role, part of the Sec protein translocase complex. Interacts with the SecYEG preprotein conducting channel. Has a central role in coupling the hydrolysis of ATP to the transfer of proteins into and across the cell membrane, serving as an ATP-driven molecular motor driving the stepwise translocation of polypeptide chains across the membrane. The protein is Protein translocase subunit SecA 2 of Bacillus thuringiensis subsp. konkukian (strain 97-27).